The chain runs to 335 residues: Aliphatic sulfonates import ATP-binding protein SsuB (335 aa).

The region spanning 74–293 (VRLTRVSKRY…ARASAAFAAL (220 aa)) is the ABC transporter domain. Residue 106–113 (GRSGCGKS) participates in ATP binding. The segment at 308-335 (APAAPNAAGPEGASRGRAAPASGLRWAV) is disordered.

The protein belongs to the ABC transporter superfamily. Aliphatic sulfonates importer (TC 3.A.1.17.2) family. In terms of assembly, the complex is composed of two ATP-binding proteins (SsuB), two transmembrane proteins (SsuC) and a solute-binding protein (SsuA).

The protein resides in the cell inner membrane. The catalysed reaction is ATP + H2O + aliphatic sulfonate-[sulfonate-binding protein]Side 1 = ADP + phosphate + aliphatic sulfonateSide 2 + [sulfonate-binding protein]Side 1.. Part of the ABC transporter complex SsuABC involved in aliphatic sulfonates import. Responsible for energy coupling to the transport system. This is Aliphatic sulfonates import ATP-binding protein SsuB from Burkholderia mallei (strain ATCC 23344).